Consider the following 264-residue polypeptide: Glutamate racemase (264 aa).

Residues 10–11 (DS) and 42–43 (YG) each bind substrate. Residue C73 is the Proton donor/acceptor of the active site. 74-75 (NT) is a substrate binding site. Residue C183 is the Proton donor/acceptor of the active site. Position 184–185 (184–185 (TH)) interacts with substrate.

The protein belongs to the aspartate/glutamate racemases family.

It catalyses the reaction L-glutamate = D-glutamate. It participates in cell wall biogenesis; peptidoglycan biosynthesis. In terms of biological role, provides the (R)-glutamate required for cell wall biosynthesis. This chain is Glutamate racemase, found in Streptococcus suis (strain 98HAH33).